The primary structure comprises 294 residues: Undecaprenyl-diphosphatase (294 aa).

6 helical membrane passes run 39–59, 93–113, 123–143, 198–218, 232–252, and 268–288; these read PGAA…ILYF, ATLG…GFTL, NLWI…VVDA, SFLM…VKAV, PTLV…IGFL, and IGLA…AIDP.

It belongs to the UppP family.

The protein localises to the cell membrane. It carries out the reaction di-trans,octa-cis-undecaprenyl diphosphate + H2O = di-trans,octa-cis-undecaprenyl phosphate + phosphate + H(+). Catalyzes the dephosphorylation of undecaprenyl diphosphate (UPP). Confers resistance to bacitracin. This Bifidobacterium longum subsp. infantis (strain ATCC 15697 / DSM 20088 / JCM 1222 / NCTC 11817 / S12) protein is Undecaprenyl-diphosphatase.